The following is a 123-amino-acid chain: ATP synthase epsilon chain (123 aa).

Belongs to the ATPase epsilon chain family. As to quaternary structure, F-type ATPases have 2 components, CF(1) - the catalytic core - and CF(0) - the membrane proton channel. CF(1) has five subunits: alpha(3), beta(3), gamma(1), delta(1), epsilon(1). CF(0) has three main subunits: a, b and c.

The protein resides in the cell inner membrane. Functionally, produces ATP from ADP in the presence of a proton gradient across the membrane. This is ATP synthase epsilon chain from Helicobacter pylori (strain P12).